Reading from the N-terminus, the 170-residue chain is tRNA-splicing endonuclease (170 aa).

Active-site residues include Y106, H116, and K147.

The protein belongs to the tRNA-intron endonuclease family. Archaeal short subfamily. In terms of assembly, homotetramer; although the tetramer contains four active sites, only two participate in the cleavage. Therefore, it should be considered as a dimer of dimers.

It catalyses the reaction pretRNA = a 3'-half-tRNA molecule with a 5'-OH end + a 5'-half-tRNA molecule with a 2',3'-cyclic phosphate end + an intron with a 2',3'-cyclic phosphate and a 5'-hydroxyl terminus.. Endonuclease that removes tRNA introns. Cleaves pre-tRNA at the 5'- and 3'-splice sites to release the intron. The products are an intron and two tRNA half-molecules bearing 2',3' cyclic phosphate and 5'-OH termini. Recognizes a pseudosymmetric substrate in which 2 bulged loops of 3 bases are separated by a stem of 4 bp. The sequence is that of tRNA-splicing endonuclease from Methanothermobacter thermautotrophicus (strain ATCC 29096 / DSM 1053 / JCM 10044 / NBRC 100330 / Delta H) (Methanobacterium thermoautotrophicum).